The sequence spans 378 residues: Alcohol dehydrogenase class-3 (378 aa).

A1 carries the N-acetylalanine modification. C46 contributes to the Zn(2+) binding site. Position 47 (H47) interacts with NAD(+). T48 and H68 together coordinate an alcohol. Residues H68, E69, C98, C101, C104, C112, and C176 each coordinate Zn(2+). NAD(+) contacts are provided by residues 201–206, D225, K230, 294–296, 319–321, and R371; these read GLGTVG, VGV, and TAF.

It belongs to the zinc-containing alcohol dehydrogenase family. Class-III subfamily. In terms of assembly, homodimer. Zn(2+) serves as cofactor.

The protein resides in the cytoplasm. It carries out the reaction a primary alcohol + NAD(+) = an aldehyde + NADH + H(+). The enzyme catalyses a secondary alcohol + NAD(+) = a ketone + NADH + H(+). The catalysed reaction is S-(hydroxymethyl)glutathione + NADP(+) = S-formylglutathione + NADPH + H(+). It catalyses the reaction S-(hydroxymethyl)glutathione + NAD(+) = S-formylglutathione + NADH + H(+). Class-III ADH is remarkably ineffective in oxidizing ethanol, but it readily catalyzes the oxidation of long-chain primary alcohols and the oxidation of S-(hydroxymethyl) glutathione. The chain is Alcohol dehydrogenase class-3 from Pisum sativum (Garden pea).